A 429-amino-acid chain; its full sequence is Glutamate-1-semialdehyde 2,1-aminomutase 2 (429 aa).

Lys-268 carries the post-translational modification N6-(pyridoxal phosphate)lysine.

This sequence belongs to the class-III pyridoxal-phosphate-dependent aminotransferase family. HemL subfamily. As to quaternary structure, homodimer. Pyridoxal 5'-phosphate is required as a cofactor.

It localises to the cytoplasm. It catalyses the reaction (S)-4-amino-5-oxopentanoate = 5-aminolevulinate. It participates in porphyrin-containing compound metabolism; protoporphyrin-IX biosynthesis; 5-aminolevulinate from L-glutamyl-tRNA(Glu): step 2/2. This Bacillus mycoides (strain KBAB4) (Bacillus weihenstephanensis) protein is Glutamate-1-semialdehyde 2,1-aminomutase 2.